The following is a 267-amino-acid chain: MESSILERCFSQSKKEGRIALMPFIMAGDPDVNTSAEILIMLEKKGADIIELGIPYSDPLADGPIIQKAASRALNSGTSPKSVLEMLSTLKTKLSVPIILFTYSNPLLNYGMEEFCIDASKAGAAGLVVPDLPLEETEKLSSIALSKNLDLVLLVAPTTPKERMRKISQRSNGFTYLVSVTGVTGERSALENRVQLLINELRGFSSTPVAVGFGISDTKHVIQVKRWGADGAIIGSALVKRISNATTGQEAEEAGKFCSELYKATSL.

Active-site proton acceptor residues include glutamate 51 and aspartate 62.

The protein belongs to the TrpA family. As to quaternary structure, tetramer of two alpha and two beta chains.

It catalyses the reaction (1S,2R)-1-C-(indol-3-yl)glycerol 3-phosphate + L-serine = D-glyceraldehyde 3-phosphate + L-tryptophan + H2O. Its pathway is amino-acid biosynthesis; L-tryptophan biosynthesis; L-tryptophan from chorismate: step 5/5. Its function is as follows. The alpha subunit is responsible for the aldol cleavage of indoleglycerol phosphate to indole and glyceraldehyde 3-phosphate. The polypeptide is Tryptophan synthase alpha chain (Prochlorococcus marinus (strain SARG / CCMP1375 / SS120)).